The primary structure comprises 103 residues: MSIYVGNLSYDVTEESLNAVFAEYGSVKRVQLPVDRETGRVRGFGFVEMGSDAEETAAIEALDGAEWMGRDLKVNKAKPREDRGGSRGSFGGNRSNNNFRNRY.

The RRM domain occupies 2–79; it reads SIYVGNLSYD…RDLKVNKAKP (78 aa). Basic and acidic residues predominate over residues 74–85; it reads VNKAKPREDRGG. The segment at 74–103 is disordered; the sequence is VNKAKPREDRGGSRGSFGGNRSNNNFRNRY. Positions 92–103 are enriched in low complexity; sequence GNRSNNNFRNRY.

This chain is Putative RNA-binding protein RbpB (rbpB), found in Nostoc sp. (strain PCC 7120 / SAG 25.82 / UTEX 2576).